We begin with the raw amino-acid sequence, 432 residues long: Adenylosuccinate synthetase (432 aa).

GTP contacts are provided by residues 12–18 (GDEGKGK) and 40–42 (GHT). The active-site Proton acceptor is Asp13. Asp13 and Gly40 together coordinate Mg(2+). IMP contacts are provided by residues 13-16 (DEGK), 38-41 (NAGH), Thr132, Arg146, Gln226, Thr241, and Arg305. His41 functions as the Proton donor in the catalytic mechanism. Substrate is bound at residue 301–307 (VVTGRKR). Residues Arg307, 333–335 (KLD), and 415–417 (STS) each bind GTP.

Belongs to the adenylosuccinate synthetase family. Homodimer. Mg(2+) is required as a cofactor.

It localises to the cytoplasm. The catalysed reaction is IMP + L-aspartate + GTP = N(6)-(1,2-dicarboxyethyl)-AMP + GDP + phosphate + 2 H(+). The protein operates within purine metabolism; AMP biosynthesis via de novo pathway; AMP from IMP: step 1/2. Plays an important role in the de novo pathway of purine nucleotide biosynthesis. Catalyzes the first committed step in the biosynthesis of AMP from IMP. This is Adenylosuccinate synthetase from Mesorhizobium japonicum (strain LMG 29417 / CECT 9101 / MAFF 303099) (Mesorhizobium loti (strain MAFF 303099)).